We begin with the raw amino-acid sequence, 79 residues long: Sulfur carrier protein TusA (79 aa).

The Cysteine persulfide intermediate role is filled by C16.

The protein belongs to the sulfur carrier protein TusA family.

The protein localises to the cytoplasm. Its function is as follows. Sulfur carrier protein which probably makes part of a sulfur-relay system. The protein is Sulfur carrier protein TusA of Pseudomonas aeruginosa (strain LESB58).